Reading from the N-terminus, the 148-residue chain is Large ribosomal subunit protein bL9 (148 aa).

This sequence belongs to the bacterial ribosomal protein bL9 family.

Its function is as follows. Binds to the 23S rRNA. The protein is Large ribosomal subunit protein bL9 of Staphylococcus epidermidis (strain ATCC 35984 / DSM 28319 / BCRC 17069 / CCUG 31568 / BM 3577 / RP62A).